Here is a 534-residue protein sequence, read N- to C-terminus: GPI transamidase component GPI17 (534 aa).

At 1–8 (MSNANLRK) the chain is on the cytoplasmic side. A helical transmembrane segment spans residues 9-29 (WVGFCFVAIYLFLGVPLWYKL). The Lumenal segment spans residues 30-472 (TTVYRASLPI…VQQNFFPQEH (443 aa)). N-linked (GlcNAc...) asparagine glycosylation is found at Asn-100, Asn-170, Asn-228, Asn-247, and Asn-299. The chain crosses the membrane as a helical span at residues 473 to 493 (MIAVYLPLLGPISAVMFFGFY). Residues 494-534 (NVMKEKNQKSKKNGTEREVAKEKLELKEAQKLHAIDGEDEL) lie on the Cytoplasmic side of the membrane.

This sequence belongs to the PIGS family. Forms a complex with CDC91, GPI16, GPI8 and GAA1. In terms of processing, N-glycosylated.

It localises to the endoplasmic reticulum membrane. Its pathway is glycolipid biosynthesis; glycosylphosphatidylinositol-anchor biosynthesis. Component of the GPI transamidase complex. Involved in transfer of GPI to proteins. This is GPI transamidase component GPI17 (GPI17) from Saccharomyces cerevisiae (strain ATCC 204508 / S288c) (Baker's yeast).